Reading from the N-terminus, the 579-residue chain is L-ascorbate oxidase (579 aa).

The first 30 residues, 1 to 30, serve as a signal peptide directing secretion; sequence MLQMGKAREPNFLILFFFGLILAFGISSEG. 2 consecutive Plastocyanin-like domains span residues 33–152 and 164–330; these read IRHY…LIVD and DGEI…NYLP. 3 cysteine pairs are disulfide-bonded: Cys-49–Cys-231, Cys-111–Cys-568, and Cys-210–Cys-223. Positions 90 and 92 each coordinate Cu cation. N-linked (GlcNAc...) asparagine glycosylation is present at Asn-122. The Cu cation site is built by His-134 and His-136. Asn-355 and Asn-470 each carry an N-linked (GlcNAc...) asparagine glycan. Residues 374–553 enclose the Plastocyanin-like 3 domain; it reads NRRIFLLNTQ…HMGMGVVFAE (180 aa). Positions 475, 478, 480, 536, 537, 538, 542, and 547 each coordinate Cu cation.

It belongs to the multicopper oxidase family. As to quaternary structure, dimer. Requires Cu cation as cofactor.

Its subcellular location is the secreted. It carries out the reaction 4 L-ascorbate + O2 = 4 monodehydro-L-ascorbate radical + 2 H2O. May be involved in a redox system involving ascorbic acid. The polypeptide is L-ascorbate oxidase (AAO) (Cucurbita maxima (Pumpkin)).